The chain runs to 283 residues: uncharacterized protein (283 aa).

Residues 1–10 (MELNKTSESL) are compositionally biased toward polar residues. Disordered stretches follow at residues 1 to 99 (MELN…NPTS) and 255 to 283 (DQEG…EAHI). 3 stretches are compositionally biased toward basic and acidic residues: residues 14-34 (KIDH…REVR), 42-53 (SSTRQEKADRMP), and 61-71 (ESSKGSEEGAV).

It belongs to the chlamydial CPn_0705/CT_671/TC_0042 family.

This is an uncharacterized protein from Chlamydia trachomatis serovar D (strain ATCC VR-885 / DSM 19411 / UW-3/Cx).